The sequence spans 95 residues: Large ribosomal subunit protein uL23 (95 aa).

The protein belongs to the universal ribosomal protein uL23 family. As to quaternary structure, part of the 50S ribosomal subunit. Contacts protein L29, and trigger factor when it is bound to the ribosome.

In terms of biological role, one of the early assembly proteins it binds 23S rRNA. One of the proteins that surrounds the polypeptide exit tunnel on the outside of the ribosome. Forms the main docking site for trigger factor binding to the ribosome. The polypeptide is Large ribosomal subunit protein uL23 (Solibacter usitatus (strain Ellin6076)).